The primary structure comprises 144 residues: Superoxide dismutase [Mn], mitochondrial (144 aa).

3 residues coordinate Mn(2+): His10, His58, and Asp143.

The protein belongs to the iron/manganese superoxide dismutase family. As to quaternary structure, homotetramer. Mn(2+) is required as a cofactor.

It localises to the mitochondrion matrix. The enzyme catalyses 2 superoxide + 2 H(+) = H2O2 + O2. Functionally, destroys superoxide anion radicals which are normally produced within the cells and which are toxic to biological systems. The protein is Superoxide dismutase [Mn], mitochondrial of Petromyzon marinus (Sea lamprey).